Here is a 90-residue protein sequence, read N- to C-terminus: Mitochondrial import inner membrane translocase subunit Tim10 (90 aa).

The short motif at 29–54 (CHRKCVPPHYKEAELSKGESVCLDRC) is the Twin CX3C motif element. Intrachain disulfides connect cysteine 29/cysteine 54 and cysteine 33/cysteine 50.

The protein belongs to the small Tim family. In terms of assembly, heterohexamer; composed of 3 copies of TIMM9 and 3 copies of TIMM10/TIM10A, named soluble 70 kDa complex. The complex forms a 6-bladed alpha-propeller structure and associates with the TIMM22 component of the TIM22 complex. Interacts with multi-pass transmembrane proteins in transit. Also forms a complex composed of TIMM9, TIMM10/TIM10A and FXC1/TIM10B.

It is found in the mitochondrion inner membrane. Functionally, mitochondrial intermembrane chaperone that participates in the import and insertion of multi-pass transmembrane proteins into the mitochondrial inner membrane. May also be required for the transfer of beta-barrel precursors from the TOM complex to the sorting and assembly machinery (SAM complex) of the outer membrane. Acts as a chaperone-like protein that protects the hydrophobic precursors from aggregation and guide them through the mitochondrial intermembrane space. This Rattus norvegicus (Rat) protein is Mitochondrial import inner membrane translocase subunit Tim10 (Timm10).